The sequence spans 94 residues: Progonadoliberin-3 (94 aa).

The N-terminal stretch at M1 to C23 is a signal peptide. At Q24 the chain carries Pyrrolidone carboxylic acid. G33 bears the Glycine amide mark.

Belongs to the GnRH family.

The protein localises to the secreted. Stimulates the secretion of gonadotropins. The protein is Progonadoliberin-3 (gnrh3) of Carassius auratus (Goldfish).